The sequence spans 160 residues: Keratin-associated protein 13-4 (160 aa).

Tandem repeats lie at residues 41–50 (CQLGSSLYRD), 51–60 (CQKTCWEPAS), 61–70 (CQKSCYHPRT), and 77–86 (CQTTCSGSLG). The segment at 41–86 (CQLGSSLYRDCQKTCWEPASCQKSCYHPRTSMLCCPCQTTCSGSLG) is 4 X 10 AA approximate repeats.

The protein belongs to the PMG family. Interacts with hair keratins.

In the hair cortex, hair keratin intermediate filaments are embedded in an interfilamentous matrix, consisting of hair keratin-associated proteins (KRTAP), which are essential for the formation of a rigid and resistant hair shaft through their extensive disulfide bond cross-linking with abundant cysteine residues of hair keratins. The matrix proteins include the high-sulfur and high-glycine-tyrosine keratins. This Hylobates agilis (Agile gibbon) protein is Keratin-associated protein 13-4 (KRTAP13-4).